Here is a 386-residue protein sequence, read N- to C-terminus: Agamous-like MADS-box protein AGL103 (386 aa).

Residues 29–76 (SSSRATSLIKRQQTVFKKAKELSILCDIDVCVICYGSNGELKTWPEER) form the MADS-box domain.

As to quaternary structure, interacts with MEE14/CBP1.

The protein localises to the nucleus. Its function is as follows. Probable transcription factor that may function in the maintenance of the proper function of the central cell in pollen tube attraction. The chain is Agamous-like MADS-box protein AGL103 from Arabidopsis thaliana (Mouse-ear cress).